We begin with the raw amino-acid sequence, 389 residues long: Type II methyltransferase M2.BsuMI (389 aa).

Residues 1–299 (MKVVSLFSGI…ENLSQPKGSI (299 aa)) form the SAM-dependent MTase C5-type domain. Cysteine 69 is an active-site residue.

This sequence belongs to the class I-like SAM-binding methyltransferase superfamily. C5-methyltransferase family. Monomer. May form a complex with YdiP, also seems to be active alone.

It carries out the reaction a 2'-deoxycytidine in DNA + S-adenosyl-L-methionine = a 5-methyl-2'-deoxycytidine in DNA + S-adenosyl-L-homocysteine + H(+). Its activity is regulated as follows. Somewhat inhibited by MgCl(2) and spermidine, strongly inhibited by MnCl(2). Functionally, a methylase, recognizes the double-stranded sequence 5'-YTCGAR-3', methylates C-3 on both strands, and protects the DNA from cleavage by the BsuMI endonuclease. The sequence is that of Type II methyltransferase M2.BsuMI (ydiP) from Bacillus subtilis (strain 168).